The sequence spans 248 residues: Ribosomal RNA small subunit methyltransferase A (248 aa).

His-11, Leu-13, Gly-38, Glu-60, Asp-83, and Asn-101 together coordinate S-adenosyl-L-methionine.

It belongs to the class I-like SAM-binding methyltransferase superfamily. rRNA adenine N(6)-methyltransferase family. RsmA subfamily.

The protein resides in the cytoplasm. The enzyme catalyses adenosine(1518)/adenosine(1519) in 16S rRNA + 4 S-adenosyl-L-methionine = N(6)-dimethyladenosine(1518)/N(6)-dimethyladenosine(1519) in 16S rRNA + 4 S-adenosyl-L-homocysteine + 4 H(+). Specifically dimethylates two adjacent adenosines (A1518 and A1519) in the loop of a conserved hairpin near the 3'-end of 16S rRNA in the 30S particle. May play a critical role in biogenesis of 30S subunits. The protein is Ribosomal RNA small subunit methyltransferase A of Aquifex aeolicus (strain VF5).